The primary structure comprises 285 residues: MTENKAENKQTEKTEKMEVNIIIISDSAGETAFNNAQAAAVQFPDAEVNYRRYPFIVNEKKLAATLEEIEQYPNLVIVYSMLDEKLQLPIIKFAREHKARYIDILSPIIEAISQTTHMKPTGLVGANHQLTNKYFNRISAMEFAVMYDDGKDPRGFLEADVVLLGVSRTSKTPLSLLLANKGLKVANLPLVPQTHIPNEIYQIDPTKIIGLTTDPQVLNRIRRQRMISYGMDPDTAYSNMDSINAELDSAMALYKKLGCFVINVAERSIEETAALIMNHLSYEED.

Glycine 165 to threonine 172 is a binding site for ADP.

It belongs to the pyruvate, phosphate/water dikinase regulatory protein family. PDRP subfamily.

The catalysed reaction is N(tele)-phospho-L-histidyl/L-threonyl-[pyruvate, phosphate dikinase] + ADP = N(tele)-phospho-L-histidyl/O-phospho-L-threonyl-[pyruvate, phosphate dikinase] + AMP + H(+). It catalyses the reaction N(tele)-phospho-L-histidyl/O-phospho-L-threonyl-[pyruvate, phosphate dikinase] + phosphate + H(+) = N(tele)-phospho-L-histidyl/L-threonyl-[pyruvate, phosphate dikinase] + diphosphate. Bifunctional serine/threonine kinase and phosphorylase involved in the regulation of the pyruvate, phosphate dikinase (PPDK) by catalyzing its phosphorylation/dephosphorylation. In Lactobacillus delbrueckii subsp. bulgaricus (strain ATCC 11842 / DSM 20081 / BCRC 10696 / JCM 1002 / NBRC 13953 / NCIMB 11778 / NCTC 12712 / WDCM 00102 / Lb 14), this protein is Putative pyruvate, phosphate dikinase regulatory protein.